The chain runs to 407 residues: Amylovoran biosynthesis glycosyltransferase AmsK (407 aa).

The protein belongs to the glycosyltransferase group 1 family. Glycosyltransferase 4 subfamily.

Its pathway is glycan metabolism; exopolysaccharide biosynthesis. Its function is as follows. Involved in the biosynthesis of amylovoran which functions as a virulence factor. This Erwinia amylovora (Fire blight bacteria) protein is Amylovoran biosynthesis glycosyltransferase AmsK (amsK).